The following is a 345-amino-acid chain: MADFFTTPGGIAVLILAQVLAVIGFVMVSLLFLVYGDRKIWAAVQMRRGPNVVGTFGLLQTVADALKYVVKEVVVPAGADKTVFMLAPMTSFVLALLAWAVIPFNDGWVLSDINVAILFVFAISSLEVYGVIMGGWASNSKYPFLGSLRSAAQMISYEVSLGLIIIGVIISTGSMNFGGIVAAQDGPYGFFSWYWLPHFPMVFLFFISCLAETNRPPFDLPEAESELVAGYQVEYSSTPFLLFMAGEYIAIFLMCALTSLLFFGGWLSPIPGLPDGVFWMIAKMAFFFFLFAMVKAITPRYRYDQLMRLGWKVFLPFSLVWVVFVAFAAKFEWFWGAYARWGMGG.

8 consecutive transmembrane segments (helical) span residues 13-33 (VLIL…LLFL), 84-104 (FMLA…VIPF), 115-135 (VAIL…IMGG), 161-181 (LGLI…GGIV), 190-210 (FFSW…ISCL), 248-268 (YIAI…GWLS), 277-297 (VFWM…VKAI), and 309-329 (LGWK…AFAA).

It belongs to the complex I subunit 1 family. As to quaternary structure, NDH-1 is composed of 14 different subunits. Subunits NuoA, H, J, K, L, M, N constitute the membrane sector of the complex.

The protein resides in the cell inner membrane. It carries out the reaction a quinone + NADH + 5 H(+)(in) = a quinol + NAD(+) + 4 H(+)(out). NDH-1 shuttles electrons from NADH, via FMN and iron-sulfur (Fe-S) centers, to quinones in the respiratory chain. The immediate electron acceptor for the enzyme in this species is believed to be ubiquinone. Couples the redox reaction to proton translocation (for every two electrons transferred, four hydrogen ions are translocated across the cytoplasmic membrane), and thus conserves the redox energy in a proton gradient. This subunit may bind ubiquinone. In Roseobacter denitrificans (strain ATCC 33942 / OCh 114) (Erythrobacter sp. (strain OCh 114)), this protein is NADH-quinone oxidoreductase subunit H.